Consider the following 288-residue polypeptide: Light-independent protochlorophyllide reductase iron-sulfur ATP-binding protein (288 aa).

ATP-binding positions include 10–15 (GIGKST) and Lys-39. Ser-14 contributes to the Mg(2+) binding site. Residues Cys-95 and Cys-129 each contribute to the [4Fe-4S] cluster site. 180–181 (NR) lines the ATP pocket.

The protein belongs to the NifH/BchL/ChlL family. In terms of assembly, homodimer. Protochlorophyllide reductase is composed of three subunits; ChlL, ChlN and ChlB. Requires [4Fe-4S] cluster as cofactor.

The enzyme catalyses chlorophyllide a + oxidized 2[4Fe-4S]-[ferredoxin] + 2 ADP + 2 phosphate = protochlorophyllide a + reduced 2[4Fe-4S]-[ferredoxin] + 2 ATP + 2 H2O. It functions in the pathway porphyrin-containing compound metabolism; chlorophyll biosynthesis (light-independent). In terms of biological role, component of the dark-operative protochlorophyllide reductase (DPOR) that uses Mg-ATP and reduced ferredoxin to reduce ring D of protochlorophyllide (Pchlide) to form chlorophyllide a (Chlide). This reaction is light-independent. The L component serves as a unique electron donor to the NB-component of the complex, and binds Mg-ATP. The chain is Light-independent protochlorophyllide reductase iron-sulfur ATP-binding protein from Nostoc sp. (strain PCC 7120 / SAG 25.82 / UTEX 2576).